The following is a 269-amino-acid chain: Phosphatidylglycerol--prolipoprotein diacylglyceryl transferase (269 aa).

7 helical membrane passes run 10–30, 56–76, 91–111, 126–146, 172–192, 200–220, and 237–257; these read IAVSIGPISVHWYGIMYLIGF, AIFYGALGVILGGRVGYILFY, IWEGGMSFHGGLLGVIIAMFF, FLAPFVPIGLGAGRLGNFIGG, PSQLYQFALEGVALFCILWFF, YCVSGMFLLFYGIFRILVEFV, and EGQLLSLPMVIIGAGLIMAGL. An a 1,2-diacyl-sn-glycero-3-phospho-(1'-sn-glycerol)-binding site is contributed by R139.

The protein belongs to the Lgt family.

It localises to the cell inner membrane. It catalyses the reaction L-cysteinyl-[prolipoprotein] + a 1,2-diacyl-sn-glycero-3-phospho-(1'-sn-glycerol) = an S-1,2-diacyl-sn-glyceryl-L-cysteinyl-[prolipoprotein] + sn-glycerol 1-phosphate + H(+). It participates in protein modification; lipoprotein biosynthesis (diacylglyceryl transfer). Functionally, catalyzes the transfer of the diacylglyceryl group from phosphatidylglycerol to the sulfhydryl group of the N-terminal cysteine of a prolipoprotein, the first step in the formation of mature lipoproteins. The chain is Phosphatidylglycerol--prolipoprotein diacylglyceryl transferase from Marinomonas sp. (strain MWYL1).